Reading from the N-terminus, the 25-residue chain is Small ribosomal subunit protein eS32A (25 aa).

The segment at 1-25 is disordered; that stretch reads MRDKWRKKRVRRLKRKRRKMRARSK.

Belongs to the eukaryotic ribosomal protein eS32 family. In terms of assembly, component of the large ribosomal subunit (LSU). Mature yeast ribosomes consist of a small (40S) and a large (60S) subunit. The 40S small subunit contains 1 molecule of ribosomal RNA (18S rRNA) and at least 33 different proteins. The large 60S subunit contains 3 rRNA molecules (25S, 5.8S and 5S rRNA) and at least 46 different proteins.

The protein resides in the cytoplasm. It is found in the nucleus. In terms of biological role, component of the ribosome, a large ribonucleoprotein complex responsible for the synthesis of proteins in the cell. The small ribosomal subunit (SSU) binds messenger RNAs (mRNAs) and translates the encoded message by selecting cognate aminoacyl-transfer RNA (tRNA) molecules. The large subunit (LSU) contains the ribosomal catalytic site termed the peptidyl transferase center (PTC), which catalyzes the formation of peptide bonds, thereby polymerizing the amino acids delivered by tRNAs into a polypeptide chain. The nascent polypeptides leave the ribosome through a tunnel in the LSU and interact with protein factors that function in enzymatic processing, targeting, and the membrane insertion of nascent chains at the exit of the ribosomal tunnel. This chain is Small ribosomal subunit protein eS32A (rpl4101), found in Schizosaccharomyces pombe (strain 972 / ATCC 24843) (Fission yeast).